Reading from the N-terminus, the 242-residue chain is ATP-dependent dethiobiotin synthetase BioD (242 aa).

An ATP-binding site is contributed by 12 to 17 (EVGKTV). Residue Thr-16 participates in Mg(2+) binding. Lys-37 is a catalytic residue. Ser-41 serves as a coordination point for substrate. Residues Asp-51 and 112–115 (EGAG) each bind ATP. Mg(2+) contacts are provided by Asp-51 and Glu-112.

The protein belongs to the dethiobiotin synthetase family. Homodimer. It depends on Mg(2+) as a cofactor.

It localises to the cytoplasm. The catalysed reaction is (7R,8S)-7,8-diammoniononanoate + CO2 + ATP = (4R,5S)-dethiobiotin + ADP + phosphate + 3 H(+). The protein operates within cofactor biosynthesis; biotin biosynthesis; biotin from 7,8-diaminononanoate: step 1/2. Catalyzes a mechanistically unusual reaction, the ATP-dependent insertion of CO2 between the N7 and N8 nitrogen atoms of 7,8-diaminopelargonic acid (DAPA, also called 7,8-diammoniononanoate) to form a ureido ring. This chain is ATP-dependent dethiobiotin synthetase BioD, found in Bacillus cereus (strain AH820).